Consider the following 662-residue polypeptide: Probable quinol oxidase subunit 1 (662 aa).

Helical transmembrane passes span 14-34 (WMII…IAVI) and 56-76 (IGIM…IDAL). Residue histidine 102 participates in Fe(II)-heme a binding. The next 8 helical transmembrane spans lie at 103–123 (GVIM…NVVI), 140–160 (VSFW…IVGG), 187–207 (IAIQ…FVTI), 228–248 (FITT…LALM), 273–293 (FFWV…FGMY), 311–331 (MIWA…HHFF), 336–356 (GALI…PTGV), and 376–396 (MLFS…GVML). Residues histidine 279, tyrosine 283, histidine 328, and histidine 329 each coordinate Cu cation. The segment at residues 279-283 (HPEVY) is a cross-link (1'-histidyl-3'-tyrosine (His-Tyr)). A heme a3-binding site is contributed by histidine 414. A run of 5 helical transmembrane segments spans residues 415–435 (FHYT…IFWY), 451–471 (CFWF…ILGL), 492–512 (FIST…VASI), 587–604 (PVGF…FFLI), and 608–627 (IVPA…WRSF). Fe(II)-heme a is bound at residue histidine 416.

Belongs to the heme-copper respiratory oxidase family. It depends on Cu cation as a cofactor. Ferriheme a serves as cofactor. Heme A3. is required as a cofactor.

It localises to the cell membrane. It catalyses the reaction 2 a quinol + O2 = 2 a quinone + 2 H2O. It functions in the pathway energy metabolism; oxidative phosphorylation. In terms of biological role, catalyzes quinol oxidation with the concomitant reduction of oxygen to water. This Staphylococcus epidermidis (strain ATCC 35984 / DSM 28319 / BCRC 17069 / CCUG 31568 / BM 3577 / RP62A) protein is Probable quinol oxidase subunit 1 (qoxB).